The primary structure comprises 371 residues: Glycosyltransferase 8 domain-containing protein 1 (371 aa).

Topologically, residues 1–5 are cytoplasmic; it reads MSFRK. Residues 6 to 26 form a helical; Signal-anchor for type II membrane protein membrane-spanning segment; sequence VTIIIWALAVILFLLALHHNF. Topologically, residues 27 to 371 are lumenal; it reads LSLSSLLRND…RRHMDTSNIK (345 aa). N257 carries N-linked (GlcNAc...) asparagine glycosylation.

The protein belongs to the glycosyltransferase 8 family.

It localises to the membrane. The sequence is that of Glycosyltransferase 8 domain-containing protein 1 (Glt8d1) from Rattus norvegicus (Rat).